Consider the following 261-residue polypeptide: CD40 ligand (261 aa).

Residues 1–22 (MIETYSQPSPRSVATGPPVSMK) lie on the Cytoplasmic side of the membrane. Residues 23–46 (IFMYLLTVFLITQMIGSALFAVYL) form a helical; Signal-anchor for type II membrane protein membrane-spanning segment. The Extracellular portion of the chain corresponds to 47 to 261 (HRRLDKIEDE…GFTSFGLLKL (215 aa)). Residues 122–261 (IAAHVISEAS…GFTSFGLLKL (140 aa)) enclose the THD domain. A disulfide bridge links C178 with C218. N240 carries an N-linked (GlcNAc...) asparagine glycan.

It belongs to the tumor necrosis factor family. As to quaternary structure, homotrimer. Interacts with CD28. CD40 ligand, soluble form: Exists as either a monomer or a homotrimer. Forms a ternary complex between CD40 and integrins for CD40-CD40LG signaling. Post-translationally, the soluble form derives from the membrane form by proteolytic processing.

Its subcellular location is the cell membrane. It localises to the cell surface. The protein resides in the secreted. In terms of biological role, cytokine that acts as a ligand to CD40/TNFRSF5. Costimulates T-cell proliferation and cytokine production. Its cross-linking on T-cells generates a costimulatory signal which enhances the production of IL4 and IL10 in conjunction with the TCR/CD3 ligation and CD28 costimulation. Induces the activation of NF-kappa-B. Induces the activation of kinases MAPK8 and PAK2 in T-cells. Mediates B-cell proliferation in the absence of co-stimulus as well as IgE production in the presence of IL4. Involved in immunoglobulin class switching. Its function is as follows. Acts as a ligand for integrins, specifically ITGA5:ITGB1 and ITGAV:ITGB3; both integrins and the CD40 receptor are required for activation of CD40-CD40LG signaling, which have cell-type dependent effects, such as B-cell activation, NF-kappa-B signaling and anti-apoptotic signaling. The chain is CD40 ligand (CD40LG) from Bos taurus (Bovine).